Consider the following 101-residue polypeptide: DNA-binding protein TubR (101 aa).

Homodimer. Dimers bind to DNA, forming a protein-bound filament which may form a helix around the TubZ filament.

Its function is as follows. A DNA-binding protein that is part of the type III plasmid partition system used to ensure correct segregation of the pBM400 plasmid. Binds the plasmid origin of replication, probably cooperatively, forming a ring or short helix with external DNA. Its effect on RNA expression has not been shown. The sequence is that of DNA-binding protein TubR from Priestia megaterium (strain ATCC 12872 / QMB1551) (Bacillus megaterium).